Here is a 174-residue protein sequence, read N- to C-terminus: CEN-like protein 1 (174 aa).

The protein belongs to the phosphatidylethanolamine-binding protein family. Expressed in vegetative axillary meristems but not in the main shoot meristem.

It localises to the cytoplasm. In terms of biological role, may form complexes with phosphorylated ligands by interfering with kinases and their effectors. The polypeptide is CEN-like protein 1 (CET1) (Nicotiana tabacum (Common tobacco)).